We begin with the raw amino-acid sequence, 676 residues long: Transcription factor RLM1 (676 aa).

Residues 3–57 form the MADS-box domain; that stretch reads RRKIEIQRISDDRNRAVTFIKRKAGLFKKAHELSVLCQVDIAVIILGSNNTFYEF. Residues 58–87 constitute a DNA-binding region (mef2-type); sequence SSVDTNDLIYHYQNDKNLLHEVKDPSDYGD. Positions 103–120 are enriched in polar residues; it reads SSMSNKPSKSNVKGMNQS. Residues 103-156 are disordered; sequence SSMSNKPSKSNVKGMNQSENDDDENNDEDDDDHGNFERNSNMHSNKKASDKNIP. S120 is modified (phosphoserine). Residues 121–134 show a composition bias toward acidic residues; it reads ENDDDENNDEDDDD. The residue at position 164 (S164) is a Phosphoserine. Residues 173-183 show a composition bias toward basic and acidic residues; sequence DGSEQNKRHPE. Disordered regions lie at residues 173-192, 202-318, 330-424, 472-514, and 532-631; these read DGSEQNKRHPENALPPLQHL, ISRT…RRKL, NNNF…PFGS, KKQS…VHDL, and MGPN…NSST. Residues 260–276 are compositionally biased toward polar residues; the sequence is ISPNKFSKPFTNASSRT. Residues 284–295 are compositionally biased toward low complexity; the sequence is NNSGSNNNDNSN. The span at 296 to 312 shows a compositional bias: polar residues; the sequence is YTQSPSNSLEDSIQQTV. Low complexity-rich tracts occupy residues 334–359, 368–381, and 399–417; these read SSNSAIPSEPSSASSTSANGNSMGSS, SRSSKISPLSASAS, and PNANAPNGSNNGNGSNNNN. 2 positions are modified to phosphoserine: S374 and S377. A compositionally biased stretch (polar residues) spans 472–506; sequence KKQSQTVPLTTTLTGRPPSTFSGPETSNGPPTGSL. The segment covering 539–604 has biased composition (low complexity); it reads PGNTNNPGTF…NSNNSYYSNN (66 aa). The segment covering 621-631 has biased composition (polar residues); the sequence is GDSNNQSNSST.

The protein belongs to the MEF2 family. In terms of assembly, can heterodimerize with SPM1. Interacts with KDX1 and SLT2. Post-translationally, phosphorylated by SLT2.

The protein localises to the nucleus. Functionally, may function as a transcription factor downstream of MPK1 that is subject to activation by the MPK1 mitogen-activated protein kinase pathway. Binds to the DNA sequence 5'-CTA[TA](4)TAG-3'. At least some RML1 target genes are involved in cell wall biosynthesis. This Saccharomyces cerevisiae (strain ATCC 204508 / S288c) (Baker's yeast) protein is Transcription factor RLM1 (RLM1).